Here is a 460-residue protein sequence, read N- to C-terminus: Cell death abnormality protein 8 (460 aa).

Residues 1-45 (MYLKKHESKLLLIPKNEDKEDAGIIAVLTDRVPSVLIVRWFDLFC) lie on the Cytoplasmic side of the membrane. A helical membrane pass occupies residues 46 to 66 (FGFAMCSYVLDFFSDIGIAIF). The Extracellular portion of the chain corresponds to 67 to 77 (HFWAGRHLSGA). The chain crosses the membrane as a helical span at residues 78–98 (LVLTFALIPSVIINIISMVWM). At 99–123 (LDDEMHWKRRAHPRRTGTFELNQKR) the chain is on the cytoplasmic side. A helical transmembrane segment spans residues 124-144 (FISLGKMITLCIFQMGPLFWY). Topologically, residues 145 to 219 (YKALYYGWMF…YYISGKYPYW (75 aa)) are extracellular. A helical membrane pass occupies residues 220–240 (LYFQAASLTLSIISISWSVVV). Residues 241 to 274 (QNRSLRMTRDDKVNIWPHEAVLQFCWRFLTILAR) are Cytoplasmic-facing. Residues 275 to 295 (IITLVAFVLLFGIYVVFLIFG) traverse the membrane as a helical segment. At 296 to 320 (HLIVTLVHVIFLQALHIEACTHIEK) the chain is on the extracellular side. The chain crosses the membrane as a helical span at residues 321–341 (LLLLINAMIHLFTPFNMAEGN). Residues 342 to 353 (TRYRYLVAYTVE) are Cytoplasmic-facing. The chain crosses the membrane as a helical span at residues 354–374 (FIEMMIIFLLLPTPLDAFPLI). Residues 375–378 (EKIR) lie on the Extracellular side of the membrane. A helical membrane pass occupies residues 379–399 (IGVPATFFIGIFIMLIYYKFF). Over 400-460 (HPNRRQDLEA…SLLEEDECHN (61 aa)) the chain is Cytoplasmic.

Belongs to the XK family. Cleavage by ced-3 activates ced-8 function in promoting phosphatidylserine exposure at the surface of apoptotic cells.

The protein resides in the cell membrane. Its function is as follows. Acts downstream of ced-9 and caspase ced-3 to promote phosphatidylserine exposure on apoptotic cell surface, possibly by mediating phospholipid scrambling. Phosphatidylserine is a specific marker only present at the surface of apoptotic cells and acts as a specific signal for engulfment. Regulates apoptosis kinetics during embryonic development. Not required for engulfment of germ cell corpses. The polypeptide is Cell death abnormality protein 8 (Caenorhabditis briggsae).